Consider the following 559-residue polypeptide: Probable D-2-hydroxyglutarate dehydrogenase, mitochondrial (559 aa).

The transit peptide at 1–80 (MARRAAAGLL…MNFEVQKRSF (80 aa)) directs the protein to the mitochondrion. The region spanning 131–310 (YKGSSQLLLL…TKIAILTPAK (180 aa)) is the FAD-binding PCMH-type domain.

It belongs to the FAD-binding oxidoreductase/transferase type 4 family. Homodimer. FAD serves as cofactor.

Its subcellular location is the mitochondrion. It carries out the reaction (R)-2-hydroxyglutarate + A = 2-oxoglutarate + AH2. Catalyzes the oxidation of D-2-hydroxyglutarate to alpha-ketoglutarate. The protein is Probable D-2-hydroxyglutarate dehydrogenase, mitochondrial (D2HGDH) of Oryza sativa subsp. indica (Rice).